A 572-amino-acid polypeptide reads, in one-letter code: Asparagine synthetase [glutamine-hydrolyzing] 1 (572 aa).

The For GATase activity role is filled by C2. The 185-residue stretch at 2–186 (CGIFAAFRHE…PGHVYDSKTD (185 aa)) folds into the Glutamine amidotransferase type-2 domain. Residues 49 to 53 (RLAIV), 74 to 76 (NGE), and D97 each bind L-glutamine. An Asparagine synthetase domain is found at 194 to 546 (PDWLDEKRIP…QKTVADTVMR (353 aa)). Position 233 (L233) interacts with ATP. At S265 the chain carries Phosphoserine. ATP is bound by residues I292 and 366 to 367 (SG). Position 509 is a phosphoserine (S509).

The enzyme catalyses L-aspartate + L-glutamine + ATP + H2O = L-asparagine + L-glutamate + AMP + diphosphate + H(+). The protein operates within amino-acid biosynthesis; L-asparagine biosynthesis; L-asparagine from L-aspartate (L-Gln route): step 1/1. This is Asparagine synthetase [glutamine-hydrolyzing] 1 (ASN1) from Saccharomyces cerevisiae (strain ATCC 204508 / S288c) (Baker's yeast).